A 337-amino-acid polypeptide reads, in one-letter code: Protein-methionine-sulfoxide reductase catalytic subunit MsrP (337 aa).

The segment at residues 1–54 is a signal peptide (tat-type signal); that stretch reads MLIKLPRSSECKASEITPEGIYLSRRTLLGGSLAGLALGALPGGVGAAQMSRYA. Mo-molybdopterin-binding positions include N94, 97–98, C152, T187, N237, R242, and 253–255; these read YE and SIK.

This sequence belongs to the MsrP family. As to quaternary structure, heterodimer of a catalytic subunit (MsrP) and a heme-binding subunit (MsrQ). The cofactor is Mo-molybdopterin. Predicted to be exported by the Tat system. The position of the signal peptide cleavage has not been experimentally proven.

Its subcellular location is the periplasm. It catalyses the reaction L-methionyl-[protein] + a quinone + H2O = L-methionyl-(S)-S-oxide-[protein] + a quinol. It carries out the reaction L-methionyl-[protein] + a quinone + H2O = L-methionyl-(R)-S-oxide-[protein] + a quinol. In terms of biological role, part of the MsrPQ system that repairs oxidized periplasmic proteins containing methionine sulfoxide residues (Met-O), using respiratory chain electrons. Thus protects these proteins from oxidative-stress damage caused by reactive species of oxygen and chlorine generated by the host defense mechanisms. MsrPQ is essential for the maintenance of envelope integrity under bleach stress, rescuing a wide series of structurally unrelated periplasmic proteins from methionine oxidation. The catalytic subunit MsrP is non-stereospecific, being able to reduce both (R-) and (S-) diastereoisomers of methionine sulfoxide. This chain is Protein-methionine-sulfoxide reductase catalytic subunit MsrP, found in Pseudomonas putida (strain ATCC 47054 / DSM 6125 / CFBP 8728 / NCIMB 11950 / KT2440).